Here is a 269-residue protein sequence, read N- to C-terminus: 3-methyl-2-oxobutanoate hydroxymethyltransferase (269 aa).

2 residues coordinate Mg(2+): Asp48 and Asp87. 3-methyl-2-oxobutanoate-binding positions include 48 to 49 (DS), Asp87, and Lys117. Glu119 lines the Mg(2+) pocket. Glu186 serves as the catalytic Proton acceptor.

Belongs to the PanB family. As to quaternary structure, homodecamer; pentamer of dimers. Mg(2+) is required as a cofactor.

Its subcellular location is the cytoplasm. The catalysed reaction is 3-methyl-2-oxobutanoate + (6R)-5,10-methylene-5,6,7,8-tetrahydrofolate + H2O = 2-dehydropantoate + (6S)-5,6,7,8-tetrahydrofolate. It participates in cofactor biosynthesis; (R)-pantothenate biosynthesis; (R)-pantoate from 3-methyl-2-oxobutanoate: step 1/2. Its function is as follows. Catalyzes the reversible reaction in which hydroxymethyl group from 5,10-methylenetetrahydrofolate is transferred onto alpha-ketoisovalerate to form ketopantoate. This is 3-methyl-2-oxobutanoate hydroxymethyltransferase from Moorella thermoacetica (strain ATCC 39073 / JCM 9320).